Consider the following 51-residue polypeptide: Glutamine synthetase (51 aa).

It belongs to the glutamine synthetase family. In terms of assembly, homooctamer.

The protein resides in the cytoplasm. The enzyme catalyses L-glutamate + NH4(+) + ATP = L-glutamine + ADP + phosphate + H(+). The polypeptide is Glutamine synthetase (Vitis sp. (Grape)).